The primary structure comprises 1179 residues: Putative ankyrin repeat protein RF_0381 (1179 aa).

ANK repeat units lie at residues 282 to 311 (NGYQSIHLVISGGNKGNIELQIRSTTMHRQ), 604 to 633 (NKDQLLRLGLQLGCVESVPLLITHGANPNA), 637 to 666 (HGVISLHCAAKNGNLDLAKLLAKNGADVNA), 670 to 699 (NGETVLHYAVKSGNLHLVKWLIENQANIHA), 703 to 732 (NGETVLHYAVSFNNSDLVYLLIAYGADVNA), 736 to 765 (NGLTALHYAVYDGNLDLVSLLISHGADVNA), 769 to 798 (SGETILYSAVDYGSPDLVYLLIAYGADVNA), 802 to 831 (NGETVLHYAVESGNLDLVSLLIHNGANVNN), 833 to 860 (KTILHFAAKSGNLNLVNWLIKNKADIHA), 864 to 893 (SGETILHFAAESGNLNLVNWLIKNKADIHA), 897 to 926 (SGETILHFAAKSGNLNLVNWLIKNKADIHA), 930 to 959 (SGETILHFAAKSGNLNLVNWLIKNKADIHA), 963 to 992 (SGETILHFAAESGNLNLVSLLIHNGTDINT), 996 to 1025 (DGLTALHYAVESGNLNLVSLLIHKGIDVNA), 1029 to 1058 (SGETILHFAVDLGSLDLVSLLMVRGADVNA), 1062 to 1091 (DGLTALHYAVESDNLALVSLLMVYGADVNA), 1095 to 1124 (SGETPLHYAVIFNSLDLVSLLIHNGADINT), and 1128 to 1157 (SGETVLNSIMEFNNCNILKSFILGGADINL).

The polypeptide is Putative ankyrin repeat protein RF_0381 (Rickettsia felis (strain ATCC VR-1525 / URRWXCal2) (Rickettsia azadi)).